The following is a 100-amino-acid chain: Integration host factor subunit alpha (100 aa).

Belongs to the bacterial histone-like protein family. Heterodimer of an alpha and a beta chain.

In terms of biological role, this protein is one of the two subunits of integration host factor, a specific DNA-binding protein that functions in genetic recombination as well as in transcriptional and translational control. Involved in hydrogenase gene expression. The sequence is that of Integration host factor subunit alpha (ihfA) from Rhodobacter capsulatus (Rhodopseudomonas capsulata).